We begin with the raw amino-acid sequence, 427 residues long: Serine--tRNA ligase (427 aa).

An L-serine-binding site is contributed by 235 to 237; the sequence is TAE. ATP-binding positions include 266–268 and V282; that span reads RRE. Position 289 (E289) interacts with L-serine. 353 to 356 contributes to the ATP binding site; that stretch reads EASS. S389 is a binding site for L-serine.

The protein belongs to the class-II aminoacyl-tRNA synthetase family. Type-1 seryl-tRNA synthetase subfamily. In terms of assembly, homodimer. The tRNA molecule binds across the dimer.

It is found in the cytoplasm. The catalysed reaction is tRNA(Ser) + L-serine + ATP = L-seryl-tRNA(Ser) + AMP + diphosphate + H(+). It carries out the reaction tRNA(Sec) + L-serine + ATP = L-seryl-tRNA(Sec) + AMP + diphosphate + H(+). It functions in the pathway aminoacyl-tRNA biosynthesis; selenocysteinyl-tRNA(Sec) biosynthesis; L-seryl-tRNA(Sec) from L-serine and tRNA(Sec): step 1/1. Its function is as follows. Catalyzes the attachment of serine to tRNA(Ser). Is also able to aminoacylate tRNA(Sec) with serine, to form the misacylated tRNA L-seryl-tRNA(Sec), which will be further converted into selenocysteinyl-tRNA(Sec). The protein is Serine--tRNA ligase of Chlorobaculum parvum (strain DSM 263 / NCIMB 8327) (Chlorobium vibrioforme subsp. thiosulfatophilum).